A 254-amino-acid polypeptide reads, in one-letter code: Citrate synthase-lysine N-methyltransferase CSKMT, mitochondrial (254 aa).

Residues 1–45 constitute a mitochondrion transit peptide; it reads MLLNRFLVPLRSLQKLTQARRWHQTSLINDLVVNMDKKAMWDRFY.

The protein belongs to the methyltransferase superfamily.

Its subcellular location is the mitochondrion. The catalysed reaction is L-lysyl-[citrate synthase] + S-adenosyl-L-methionine = N(6)-methyl-L-lysyl-[citrate synthase] + S-adenosyl-L-homocysteine + H(+). The enzyme catalyses N(6)-methyl-L-lysyl-[citrate synthase] + S-adenosyl-L-methionine = N(6),N(6)-dimethyl-L-lysyl-[citrate synthase] + S-adenosyl-L-homocysteine + H(+). It carries out the reaction N(6),N(6)-dimethyl-L-lysyl-[citrate synthase] + S-adenosyl-L-methionine = N(6),N(6),N(6)-trimethyl-L-lysyl-[citrate synthase] + S-adenosyl-L-homocysteine + H(+). Its activity is regulated as follows. Citrate synthase-lysine methyltransferase activity is inhibited by S-adenosylhomocysteine (AdoHcy) and oxaloacetate (OAA). Protein-lysine methyltransferase that selectively trimethylates citrate synthase (CS) in mitochondria. Seems to conduct trimethylation in a highly distributive manner rather than in a processive manner, and thus introduces a single methyl group per binding event. This Danio rerio (Zebrafish) protein is Citrate synthase-lysine N-methyltransferase CSKMT, mitochondrial.